Reading from the N-terminus, the 130-residue chain is Small ribosomal subunit protein uS9 (130 aa).

This sequence belongs to the universal ribosomal protein uS9 family.

The chain is Small ribosomal subunit protein uS9 from Aeromonas hydrophila subsp. hydrophila (strain ATCC 7966 / DSM 30187 / BCRC 13018 / CCUG 14551 / JCM 1027 / KCTC 2358 / NCIMB 9240 / NCTC 8049).